The sequence spans 91 residues: Acylphosphatase (91 aa).

In terms of domain architecture, Acylphosphatase-like spans 6-91 (CMRCYISGRV…WKDYISFDVL (86 aa)). Residues arginine 21 and asparagine 39 contribute to the active site.

The protein belongs to the acylphosphatase family.

The enzyme catalyses an acyl phosphate + H2O = a carboxylate + phosphate + H(+). In Legionella pneumophila (strain Paris), this protein is Acylphosphatase (acyP).